We begin with the raw amino-acid sequence, 504 residues long: Protein FMP42 (504 aa).

Over 1-11 (MTSTRTLRYAQ) the chain is Vacuolar. Residues 12 to 32 (VACACIWCLFSAGIIFGFAAL) form a helical membrane-spanning segment. The Cytoplasmic portion of the chain corresponds to 33–64 (KPILISEGVYHELCDPKDGDRLLCTAQDLKLN). The helical transmembrane segment at 65-85 (FIFALSATVTNIMALPVGKIL) threads the bilayer. The Vacuolar segment spans residues 86–91 (DMYGPR). Residues 92-112 (VCGIIGSCLLFLASGNFISAK) form a helical membrane-spanning segment. At 113–119 (HLVSLWD) the chain is on the cytoplasmic side. Residues 120 to 140 (PYLVGYTLLAVAGPFVFISCF) traverse the membrane as a helical segment. At 141 to 150 (QLANSFPQRS) the chain is on the vacuolar side. The chain crosses the membrane as a helical span at residues 151–171 (GTVLALLTGSFDSSSALFLLY). The Cytoplasmic segment spans residues 172-186 (RLLYQNWFPTLNVSR). The chain crosses the membrane as a helical span at residues 187 to 207 (FFTLYLIVPVFILACQLTIMP). Residues 208–302 (HSSYKTVNHI…KSAYEQIKSP (95 aa)) lie on the Vacuolar side of the membrane. 3 positions are modified to phosphoserine: Ser238, Ser249, and Ser269. The chain crosses the membrane as a helical span at residues 303-323 (WFYLMLLFALVAMLRINYFIA). Residues 324 to 344 (TVRTQEEYLLNDPDLALKLNS) lie on the Cytoplasmic side of the membrane. A helical membrane pass occupies residues 345-365 (IFDMLLPLGGAVSIPFIGLLL). Topologically, residues 366–385 (DHTDTLSTLTILFTTSTAIG) are vacuolar. Residues 386-406 (VFGLIPNSFTWNLIGIVLLVV) traverse the membrane as a helical segment. Over 407-421 (YRPFYYTVVSDYSSK) the chain is Cytoplasmic. Residues 422–442 (VFGFDTFGTVYGLLSCICGIF) traverse the membrane as a helical segment. The Vacuolar segment spans residues 443–462 (NMSQNLLDKWTHTTFNMNPF). The chain crosses the membrane as a helical span at residues 463-483 (PINLTLVILTVVFSLTLTFYI). Residues 484 to 504 (RSQILPKPVNERGLSSNYQTI) lie on the Cytoplasmic side of the membrane.

Belongs to the SLC43A transporter (TC 2.A.1.44) family.

The protein localises to the vacuole membrane. The polypeptide is Protein FMP42 (FMP42) (Saccharomyces cerevisiae (strain ATCC 204508 / S288c) (Baker's yeast)).